The chain runs to 1420 residues: tRNA (32-2'-O)-methyltransferase regulator TRM732 (1420 aa).

The tract at residues 748 to 754 is required for activity; the sequence is RRSGGLP.

This sequence belongs to the THADA family. In terms of assembly, interacts with TRM7; for 2'-O-methylation of position 32 in substrate tRNAs.

The protein localises to the cytoplasm. Functionally, together with methyltransferase TRM7, methylates the 2'-O-ribose of nucleotides at position 32 of the anticodon loop of substrate tRNAs. This Saccharomyces cerevisiae (strain ATCC 204508 / S288c) (Baker's yeast) protein is tRNA (32-2'-O)-methyltransferase regulator TRM732 (TRM732).